The primary structure comprises 164 residues: Phosphopantetheine adenylyltransferase (164 aa).

Ser11 provides a ligand contact to substrate. ATP is bound by residues 11-12 and His19; that span reads SF. Lys43, Ala76, and Arg90 together coordinate substrate. ATP is bound by residues 91–93, Glu101, and 126–132; these read GLR and YQHISSS.

This sequence belongs to the bacterial CoaD family. Homohexamer. The cofactor is Mg(2+).

Its subcellular location is the cytoplasm. It carries out the reaction (R)-4'-phosphopantetheine + ATP + H(+) = 3'-dephospho-CoA + diphosphate. The protein operates within cofactor biosynthesis; coenzyme A biosynthesis; CoA from (R)-pantothenate: step 4/5. Functionally, reversibly transfers an adenylyl group from ATP to 4'-phosphopantetheine, yielding dephospho-CoA (dPCoA) and pyrophosphate. This Streptococcus gordonii (strain Challis / ATCC 35105 / BCRC 15272 / CH1 / DL1 / V288) protein is Phosphopantetheine adenylyltransferase.